The primary structure comprises 174 residues: Shikimate kinase (174 aa).

10 to 15 (GSGKTA) lines the ATP pocket. Thr14 provides a ligand contact to Mg(2+). Substrate is bound by residues Asp32, Arg56, and Gly78. Arg118 lines the ATP pocket. Position 137 (Arg137) interacts with substrate. Residue Arg154 participates in ATP binding.

The protein belongs to the shikimate kinase family. In terms of assembly, monomer. The cofactor is Mg(2+).

It localises to the cytoplasm. It catalyses the reaction shikimate + ATP = 3-phosphoshikimate + ADP + H(+). The protein operates within metabolic intermediate biosynthesis; chorismate biosynthesis; chorismate from D-erythrose 4-phosphate and phosphoenolpyruvate: step 5/7. Catalyzes the specific phosphorylation of the 3-hydroxyl group of shikimic acid using ATP as a cosubstrate. In Symbiobacterium thermophilum (strain DSM 24528 / JCM 14929 / IAM 14863 / T), this protein is Shikimate kinase.